Consider the following 305-residue polypeptide: tRNA dimethylallyltransferase 1 (305 aa).

An ATP-binding site is contributed by 10 to 17 (GPTASGKS). Position 12 to 17 (12 to 17 (TASGKS)) interacts with substrate. Positions 35 to 38 (DSLT) are interaction with substrate tRNA.

The protein belongs to the IPP transferase family. Monomer. It depends on Mg(2+) as a cofactor.

It catalyses the reaction adenosine(37) in tRNA + dimethylallyl diphosphate = N(6)-dimethylallyladenosine(37) in tRNA + diphosphate. Catalyzes the transfer of a dimethylallyl group onto the adenine at position 37 in tRNAs that read codons beginning with uridine, leading to the formation of N6-(dimethylallyl)adenosine (i(6)A). The polypeptide is tRNA dimethylallyltransferase 1 (Trichlorobacter lovleyi (strain ATCC BAA-1151 / DSM 17278 / SZ) (Geobacter lovleyi)).